Consider the following 332-residue polypeptide: Holliday junction branch migration complex subunit RuvB (332 aa).

Positions 1–181 (MSRILDNEMM…FGITGHMEYY (181 aa)) are large ATPase domain (RuvB-L). ATP-binding positions include Leu-20, Arg-21, Gly-62, Lys-65, Thr-66, Thr-67, 128–130 (EDF), Arg-171, Tyr-181, and Arg-218. Thr-66 is a Mg(2+) binding site. The small ATPAse domain (RuvB-S) stretch occupies residues 182–252 (AHADLTEIVE…ITDKALTMLD (71 aa)). Residues 255–332 (HEGLDYVDQK…EHLGYEYSEK (78 aa)) are head domain (RuvB-H). DNA contacts are provided by Arg-291, Arg-310, Arg-312, and Arg-315.

Belongs to the RuvB family. In terms of assembly, homohexamer. Forms an RuvA(8)-RuvB(12)-Holliday junction (HJ) complex. HJ DNA is sandwiched between 2 RuvA tetramers; dsDNA enters through RuvA and exits via RuvB. An RuvB hexamer assembles on each DNA strand where it exits the tetramer. Each RuvB hexamer is contacted by two RuvA subunits (via domain III) on 2 adjacent RuvB subunits; this complex drives branch migration. In the full resolvosome a probable DNA-RuvA(4)-RuvB(12)-RuvC(2) complex forms which resolves the HJ.

It localises to the cytoplasm. The catalysed reaction is ATP + H2O = ADP + phosphate + H(+). Its function is as follows. The RuvA-RuvB-RuvC complex processes Holliday junction (HJ) DNA during genetic recombination and DNA repair, while the RuvA-RuvB complex plays an important role in the rescue of blocked DNA replication forks via replication fork reversal (RFR). RuvA specifically binds to HJ cruciform DNA, conferring on it an open structure. The RuvB hexamer acts as an ATP-dependent pump, pulling dsDNA into and through the RuvAB complex. RuvB forms 2 homohexamers on either side of HJ DNA bound by 1 or 2 RuvA tetramers; 4 subunits per hexamer contact DNA at a time. Coordinated motions by a converter formed by DNA-disengaged RuvB subunits stimulates ATP hydrolysis and nucleotide exchange. Immobilization of the converter enables RuvB to convert the ATP-contained energy into a lever motion, pulling 2 nucleotides of DNA out of the RuvA tetramer per ATP hydrolyzed, thus driving DNA branch migration. The RuvB motors rotate together with the DNA substrate, which together with the progressing nucleotide cycle form the mechanistic basis for DNA recombination by continuous HJ branch migration. Branch migration allows RuvC to scan DNA until it finds its consensus sequence, where it cleaves and resolves cruciform DNA. This chain is Holliday junction branch migration complex subunit RuvB, found in Streptococcus pneumoniae serotype 4 (strain ATCC BAA-334 / TIGR4).